The following is a 356-amino-acid chain: tRNA N6-adenosine threonylcarbamoyltransferase (356 aa).

Histidine 115 and histidine 119 together coordinate Fe cation. Substrate contacts are provided by residues 138–142 (LVSGG), aspartate 171, glycine 184, and asparagine 283. Fe cation is bound at residue aspartate 311.

The protein belongs to the KAE1 / TsaD family. It depends on Fe(2+) as a cofactor.

The protein localises to the cytoplasm. It carries out the reaction L-threonylcarbamoyladenylate + adenosine(37) in tRNA = N(6)-L-threonylcarbamoyladenosine(37) in tRNA + AMP + H(+). Its function is as follows. Required for the formation of a threonylcarbamoyl group on adenosine at position 37 (t(6)A37) in tRNAs that read codons beginning with adenine. Is involved in the transfer of the threonylcarbamoyl moiety of threonylcarbamoyl-AMP (TC-AMP) to the N6 group of A37, together with TsaE and TsaB. TsaD likely plays a direct catalytic role in this reaction. The polypeptide is tRNA N6-adenosine threonylcarbamoyltransferase (Prochlorococcus marinus (strain MIT 9215)).